A 796-amino-acid polypeptide reads, in one-letter code: Peroxisome proliferator-activated receptor gamma coactivator 1-alpha (796 aa).

Lysine 77 is subject to N6-acetyllysine. Residues 98–138 (PVDEDGLPSFDALTDGDVTTENEASPSSMPDGTPPPQEAEE) are disordered. The segment covering 114 to 127 (DVTTENEASPSSMP) has biased composition (polar residues). Positions 142-146 (LKKLL) match the LXXLL motif motif. Lysine 144 is subject to N6-acetyllysine. A Phosphothreonine; by AMPK modification is found at threonine 176. The residue at position 182 (lysine 182) is an N6-acetyllysine. Positions 211 to 274 (YLTTNDDPPH…PNDPKGSPFE (64 aa)) are disordered. The span at 217–235 (DPPHTKPTETRNSSRDKCT) shows a compositional bias: basic and acidic residues. The segment covering 242–258 (TQSQSQHLQAKPTSLSL) has biased composition (polar residues). N6-acetyllysine is present on residues lysine 252, lysine 269, lysine 276, and lysine 319. The disordered stretch occupies residues 288-349 (GTAGLTPPTT…NNSTKKGPEQ (62 aa)). The tract at residues 291 to 337 (GLTPPTTPPHKANQDNPFRASPKLKPPCKTVVPPPSKKTRYSESSGT) is interaction with PPARG. Residues 332–344 (SESSGTHGNNSTK) are compositionally biased toward polar residues. N6-acetyllysine is present on residues lysine 345, lysine 411, and lysine 449. The interval 348–796 (EQSELYAQLS…LKEAQRSLRR (449 aa)) is mediates interaction with RNF34. A disordered region spans residues 463–487 (HFGHPSQAVFDDEADKTSELRDSDF). Positions 477-486 (DKTSELRDSD) are enriched in basic and acidic residues. Serine 537 bears the Phosphoserine; by AMPK mark. Disordered regions lie at residues 541–637 (FNSP…SYEE) and 648–667 (YRRE…ERQR). Low complexity predominate over residues 568–603 (RSFSQHRSCSRSPYSRSRSRSPGSRSSSRSCYYSES). The segment covering 620–629 (SRSRSPYSRR) has biased composition (basic residues). Residues 675–751 (RVIYVGKIRP…TDFELYFCGR (77 aa)) form the RRM domain. Lysine 756 and lysine 777 each carry N6-acetyllysine.

In terms of assembly, homooligomer. Interacts with MYBBP1A; inhibits MYBBP1A transcriptional activation. Interacts with PRDM16, LPIN1 and PML. Interacts (via LXXLL motif) with RORA and RORC (via AF-2 motif); activates RORA and RORC transcriptional activation. Interacts with LRPPRC. Interacts with FOXO1. Interacts with NR5A2. Phosphorylation by AMPK in skeletal muscle increases activation of its own promoter. Phosphorylated by CLK2. Post-translationally, heavily acetylated by KAT2A/GCN5 under conditions of high nutrients, leading to inactivation of PPARGC1A. Deacetylated by SIRT1 in low nutrients/high NAD conditions, leading to its activation. In terms of processing, ubiquitinated. Ubiquitination by RNF34 induces proteasomal degradation.

The protein resides in the nucleus. It is found in the PML body. In terms of biological role, transcriptional coactivator for steroid receptors and nuclear receptors. Greatly increases the transcriptional activity of PPARG and thyroid hormone receptor on the uncoupling protein promoter. Can regulate key mitochondrial genes that contribute to the program of adaptive thermogenesis. Plays an essential role in metabolic reprogramming in response to dietary availability through coordination of the expression of a wide array of genes involved in glucose and fatty acid metabolism. Acts as a key regulator of gluconeogenesis: stimulates hepatic gluconeogenesis by increasing the expression of gluconeogenic enzymes, and acting together with FOXO1 to promote the fasting gluconeogenic program. Induces the expression of PERM1 in the skeletal muscle in an ESRRA-dependent manner. Also involved in the integration of the circadian rhythms and energy metabolism. Required for oscillatory expression of clock genes, such as BMAL1 and NR1D1, through the coactivation of RORA and RORC, and metabolic genes, such as PDK4 and PEPCK. The sequence is that of Peroxisome proliferator-activated receptor gamma coactivator 1-alpha (PPARGC1A) from Sus scrofa (Pig).